A 323-amino-acid polypeptide reads, in one-letter code: Serine/threonine-protein phosphatase PP1-gamma catalytic subunit (323 aa).

Ala-2 is subject to N-acetylalanine. The Mn(2+) site is built by Asp-64, His-66, Asp-92, and Asn-124. Residue His-125 is the Proton donor of the active site. Mn(2+) contacts are provided by His-173 and His-248. A disordered region spans residues 302-323; sequence KKPNATRPVTPPRGMITKQAKK. Phosphothreonine occurs at positions 307 and 311.

The protein belongs to the PPP phosphatase family. PP-1 subfamily. In terms of assembly, PP1 comprises a catalytic subunit, PPP1CA, PPP1CB or PPP1CC, which is folded into its native form by inhibitor 2 and glycogen synthetase kinase 3, and then complexed to one or several targeting or regulatory subunits. PPP1R12A, PPP1R12B and PPP1R12C mediate binding to myosin. PPP1R3A (in skeletal muscle), PPP1R3B (in sliver), PPP1R3C, PPP1R3D and PPP1R3F (in brain) mediate binding to glycogen. PPP1R15A and PPP1R15B mediate binding to EIF2S1. Part of a complex containing PPP1R15B, PP1 and NCK1/2. Interacts with PPP1R3B, PPP1R7 and CDCA2. Isoform 2 interacts with SPZ1. Interacts with IKFZ1; the interaction targets PPP1CC to pericentromeric heterochromatin, dephosphorylates IKAROS, stabilizes it and prevents it from degradation. Interacts with NOM1 and PPP1R8. Component of the PTW/PP1 phosphatase complex, composed of PPP1R10/PNUTS, TOX4, WDR82, and PPP1CA or PPP1CB or PPP1CC. Interacts with PPP1R8. Interacts with NEK2. Interacts with URI1; the interaction is phosphorylation-dependent and occurs in a growth factor-dependent manner. Interacts with FOXP3. Interacts with TMEM225 (via RVxF motif). Interacts with MKI67. Interacts with RRP1B; this targets PPP1CC to the nucleolus. Found in a complex with PPP1CA, PPP1CC, SHC1 and PEAK1. Interacts with DYNLT4. Interacts (via RVxF motif) with FIRRM; regulates PLK1 kinase activity. Interacts with the KNL1 complex subunit KNL1; the interaction is direct and mutually exclusive with KNL1 binding to microtubules. Component of the SHOC2-MRAS-PP1c (SMP) complex consisting of SHOC2, GTP-bound M-Ras/MRAS and the catalytic subunit of protein phosphatase 1 (either PPP1CA, PPP1CB or PPP1CC). SHOC2 and PP1c preferably bind M-Ras/MRAS, but they also bind K-Ras/KRAS, N-Ras/NRAS and H-Ras/HRAS; these interactions are GTP-dependent and both SHOC2 and PP1c are required to form a stable complex. Interacts with SHOC2 in the absence of Ras GTPases. Mn(2+) serves as cofactor. Phosphorylated by NEK2. Isoform 2 is expressed only in testis, in the late spermatocytes and early spematids (at protein level).

Its subcellular location is the cytoplasm. It localises to the nucleus. The protein localises to the cleavage furrow. The protein resides in the nucleolus. It is found in the nucleoplasm. Its subcellular location is the chromosome. It localises to the centromere. The protein localises to the kinetochore. The protein resides in the nucleus speckle. It is found in the midbody. Its subcellular location is the mitochondrion. It localises to the cytoskeleton. The protein localises to the microtubule organizing center. The catalysed reaction is O-phospho-L-seryl-[protein] + H2O = L-seryl-[protein] + phosphate. The enzyme catalyses O-phospho-L-threonyl-[protein] + H2O = L-threonyl-[protein] + phosphate. With respect to regulation, inactivated by binding to URI1. In terms of biological role, protein phosphatase that associates with over 200 regulatory proteins to form highly specific holoenzymes which dephosphorylate hundreds of biological targets. Protein phosphatase 1 (PP1) is essential for cell division, and participates in the regulation of glycogen metabolism, muscle contractility and protein synthesis. Dephosphorylates RPS6KB1. Involved in regulation of ionic conductances and long-term synaptic plasticity. May play an important role in dephosphorylating substrates such as the postsynaptic density-associated Ca(2+)/calmodulin dependent protein kinase II. Component of the PTW/PP1 phosphatase complex, which plays a role in the control of chromatin structure and cell cycle progression during the transition from mitosis into interphase. In balance with CSNK1D and CSNK1E, determines the circadian period length, through the regulation of the speed and rhythmicity of PER1 and PER2 phosphorylation. May dephosphorylate CSNK1D and CSNK1E. Regulates the recruitment of the SKA complex to kinetochores. Core component of the SHOC2-MRAS-PP1c (SMP) holophosphatase complex that regulates the MAPK pathway activation. Dephosphorylates MKI67 at the onset of anaphase. The SMP complex specifically dephosphorylates the inhibitory phosphorylation at 'Ser-259' of RAF1 kinase, 'Ser-365' of BRAF kinase and 'Ser-214' of ARAF kinase, stimulating their kinase activities. The SMP complex enhances the dephosphorylation activity and substrate specificity of PP1c. Its function is as follows. Required for normal male fertility. The protein is Serine/threonine-protein phosphatase PP1-gamma catalytic subunit (Ppp1cc) of Rattus norvegicus (Rat).